The sequence spans 244 residues: MAEFNLEALNALPKAEQAAALAVVNGQLEQLSAQERVSWALENLPGDYVLSSSFGIQAAVSLHLVTQQRPDIPVILTDTGYLFPETYQFIDALTEQLKLNLQVYRATESAAWQEARYGKLWEQGVEGIERYNLLNKVEPMNRALSELKAKTWFAGLRREQSGSRGDLPVLAIQRGVFKFLPIIDWDNRTVYQYLKENGLSYHPLWDQGYLSVGDTHTTRKWEPGMSEEETRFFGLKRECGLHEG.

Cys239 acts as the Nucleophile; cysteine thiosulfonate intermediate in catalysis.

This sequence belongs to the PAPS reductase family. CysH subfamily.

Its subcellular location is the cytoplasm. It catalyses the reaction [thioredoxin]-disulfide + sulfite + adenosine 3',5'-bisphosphate + 2 H(+) = [thioredoxin]-dithiol + 3'-phosphoadenylyl sulfate. It participates in sulfur metabolism; hydrogen sulfide biosynthesis; sulfite from sulfate: step 3/3. Functionally, catalyzes the formation of sulfite from phosphoadenosine 5'-phosphosulfate (PAPS) using thioredoxin as an electron donor. The sequence is that of Phosphoadenosine 5'-phosphosulfate reductase from Pectobacterium carotovorum subsp. carotovorum (strain PC1).